Consider the following 544-residue polypeptide: Chaperonin GroEL (544 aa).

ATP-binding positions include 30–33, lysine 51, 87–91, glycine 415, and aspartate 495; these read TLGP and DGTTT.

It belongs to the chaperonin (HSP60) family. As to quaternary structure, forms a cylinder of 14 subunits composed of two heptameric rings stacked back-to-back. Interacts with the co-chaperonin GroES.

Its subcellular location is the cytoplasm. It catalyses the reaction ATP + H2O + a folded polypeptide = ADP + phosphate + an unfolded polypeptide.. Its function is as follows. Together with its co-chaperonin GroES, plays an essential role in assisting protein folding. The GroEL-GroES system forms a nano-cage that allows encapsulation of the non-native substrate proteins and provides a physical environment optimized to promote and accelerate protein folding. The polypeptide is Chaperonin GroEL (Agrobacterium fabrum (strain C58 / ATCC 33970) (Agrobacterium tumefaciens (strain C58))).